The chain runs to 304 residues: MARTDDDTWDLATSVGATATMVAAGRARATRDGLIDDPFAEPLVRAVGVDFFTRWAAGELDAADVDVPGAAWGMQRMTDMLTARTRYIDAFFAEAGAAGIRQVVILASGLDARAYRLPWPAGTTVFEIDQPRVLEFKAATIAQLGAEPTAPVRAVAVDLRHDWPSALRQAGFDVGRPAAWAAEGLLGFLPPQAQDRLLDNVTALSADGSQLVAEVFANTGASGDALNAAGEKWRRHGLDVALDDLGFPGERNDPASYLQQLGWQPVRTPLNQMLANNGLPLQSTEPGAPFAQNYYCTAVLNKAG.

Residues D129 and 158-159 (DL) contribute to the S-adenosyl-L-methionine site.

The protein belongs to the UPF0677 family.

In terms of biological role, exhibits S-adenosyl-L-methionine-dependent methyltransferase activity. The chain is Putative S-adenosyl-L-methionine-dependent methyltransferase MAP_3385 from Mycolicibacterium paratuberculosis (strain ATCC BAA-968 / K-10) (Mycobacterium paratuberculosis).